The sequence spans 451 residues: tRNA modification GTPase MnmE (451 aa).

Residues arginine 37, glutamate 95, and lysine 135 each coordinate (6S)-5-formyl-5,6,7,8-tetrahydrofolate. Residues 232–376 (GLSIVIMGPP…LVEAIADFAG (145 aa)) enclose the TrmE-type G domain. Position 242 (asparagine 242) interacts with K(+). Residues 242–247 (NAGKST), 261–267 (SEIAGTT), and 286–289 (DTAG) each bind GTP. Position 246 (serine 246) interacts with Mg(2+). Positions 261, 263, and 266 each coordinate K(+). Residue threonine 267 participates in Mg(2+) binding. Lysine 451 contacts (6S)-5-formyl-5,6,7,8-tetrahydrofolate.

The protein belongs to the TRAFAC class TrmE-Era-EngA-EngB-Septin-like GTPase superfamily. TrmE GTPase family. In terms of assembly, homodimer. Heterotetramer of two MnmE and two MnmG subunits. K(+) is required as a cofactor.

Its subcellular location is the cytoplasm. Exhibits a very high intrinsic GTPase hydrolysis rate. Involved in the addition of a carboxymethylaminomethyl (cmnm) group at the wobble position (U34) of certain tRNAs, forming tRNA-cmnm(5)s(2)U34. The protein is tRNA modification GTPase MnmE of Beijerinckia indica subsp. indica (strain ATCC 9039 / DSM 1715 / NCIMB 8712).